Here is a 284-residue protein sequence, read N- to C-terminus: GPN-loop GTPase 3 (284 aa).

Position 13 to 18 (13 to 18 (GSGKST)) interacts with GTP. The Gly-Pro-Asn (GPN)-loop; involved in dimer interface motif lies at 72 to 74 (GPN). 174–177 (TKMD) serves as a coordination point for GTP. The tract at residues 262 to 284 (EPREHEEESSSMFDEYFQERQNE) is disordered.

This sequence belongs to the GPN-loop GTPase family. As to quaternary structure, heterodimer with GPN1. Binds to RNA polymerase II (RNAPII). Interacts directly with subunits RPB4 and RPB7 and the CTD of RPB1.

Small GTPase required for proper localization of RNA polymerase II (RNAPII). May act at an RNAP assembly step prior to nuclear import. The sequence is that of GPN-loop GTPase 3 from Mus musculus (Mouse).